Consider the following 132-residue polypeptide: HLALLLILENQASGRRLRGSARAQDPVVSRVWHKEEVEESESSRGQDFDKRRFWEKDDPTGEHVSVRHEHLEKSHIRFKEDSIDDSGSAGGLNPSKGHLRLKRHDAMEELVSVEDQALANGADPGKSNMQRV.

Residues 1–14 form the signal peptide; the sequence is HLALLLILENQASG. Residues 33 to 81 are compositionally biased toward basic and acidic residues; that stretch reads HKEEVEESESSRGQDFDKRRFWEKDDPTGEHVSVRHEHLEKSHIRFKED. Disordered regions lie at residues 33–104 and 113–132; these read HKEE…LKRH and VEDQ…MQRV. Positions 104–132 are excised as a propeptide; that stretch reads HDAMEELVSVEDQALANGADPGKSNMQRV.

To the SVP-1/-3/-4 precursor, particularly in regions where protein processing must occur.

It localises to the secreted. This is Seminal vesicle protein SVP-2 from Cavia porcellus (Guinea pig).